The following is a 1004-amino-acid chain: Putative helicase MOV-10 (1004 aa).

Lys-148 carries the N6-acetyllysine modification. Thr-254 bears the Phosphothreonine mark. Position 433 is a phosphoserine (Ser-433). 525 to 532 (GPPGTGKT) is a binding site for ATP. The short motif at 646–649 (DEAG) is the DEAG box element. The interval 922–966 (NPLLLGHDPDWKTFLEFCKENGGYTGCPFPAKLDLQQGQDLLQGL) is interaction with AGO2 and APOBEC3G. The disordered stretch occupies residues 966–1004 (LSKLSPSTSGPRRHQNLPQEREGEGGLPLQVEPEWRNEL). Ser-970 is modified (phosphoserine).

This sequence belongs to the DNA2/NAM7 helicase family. SDE3 subfamily. As to quaternary structure, interacts with DICER1, AGO2, TARBP2, EIF6 and RPL7A (60S ribosome subunit); they form a large RNA-induced silencing complex (RISC). Interacts with APOBEC3G in an RNA-dependent manner. Interacts with TRIM71 (via NHL repeats) in an RNA-dependent manner. Interacts with both protein products of LIRE1, ORF1p and ORF2p. Interacts with TUT4 and, to a lesser extent, TUT7; the interactions are RNA-dependent. Interacts with AGO2, TNRC6B and UPF1; the interactions are direct and RNA-dependent. Interacts with FMR1; this interaction is direct, occurs in an RNA-dependent manner on polysomes and induces association of MOV10 with RNAs. Interacts with SHFL; the interaction increases in presence of RNA. Interacts with DHX34; the interaction is RNA-independent. Interacts with RBM46. Ubiquitinated by the DCX(DCAF12) complex that specifically recognizes the glutamate-leucine (Glu-Leu) degron at the C-terminus, leading to its degradation.

Its subcellular location is the cytoplasm. It localises to the P-body. It is found in the nucleus. The protein localises to the cytoplasmic ribonucleoprotein granule. The protein resides in the stress granule. The catalysed reaction is ATP + H2O = ADP + phosphate + H(+). In terms of biological role, 5' to 3' RNA helicase that is involved in a number of cellular roles ranging from mRNA metabolism and translation, modulation of viral infectivity, inhibition of retrotransposition, or regulation of synaptic transmission. Plays an important role in innate antiviral immunity by promoting type I interferon production. Mechanistically, specifically uses IKKepsilon/IKBKE as the mediator kinase for IRF3 activation. Contributes to UPF1 mRNA target degradation by translocation along 3' UTRs. Required for microRNA (miRNA)-mediated gene silencing by the RNA-induced silencing complex (RISC). Required for both miRNA-mediated translational repression and miRNA-mediated cleavage of complementary mRNAs by RISC. In cooperation with FMR1, regulates miRNA-mediated translational repression by AGO2. Restricts retrotransposition of long interspersed element-1 (LINE-1) in cooperation with TUT4 and TUT7 counteracting the RNA chaperonne activity of L1RE1. Facilitates LINE-1 uridylation by TUT4 and TUT7. Required for embryonic viability and for normal central nervous system development and function. Plays two critical roles in early brain development: suppresses retroelements in the nucleus by directly inhibiting cDNA synthesis, while regulates cytoskeletal mRNAs to influence neurite outgrowth in the cytosol. May function as a messenger ribonucleoprotein (mRNP) clearance factor. In Mus musculus (Mouse), this protein is Putative helicase MOV-10 (Mov10).